The sequence spans 102 residues: NADH-quinone oxidoreductase subunit K (102 aa).

Helical transmembrane passes span 6–26 (LEHGLIVATILFALGFYGVMV), 30–50 (LLFMLMSLEIMMNAAALAFVL), and 62–82 (VMFILILTLAAAEACIGLAIV).

It belongs to the complex I subunit 4L family. In terms of assembly, NDH-1 is composed of 14 different subunits. Subunits NuoA, H, J, K, L, M, N constitute the membrane sector of the complex.

It is found in the cell inner membrane. The catalysed reaction is a quinone + NADH + 5 H(+)(in) = a quinol + NAD(+) + 4 H(+)(out). Its function is as follows. NDH-1 shuttles electrons from NADH, via FMN and iron-sulfur (Fe-S) centers, to quinones in the respiratory chain. The immediate electron acceptor for the enzyme in this species is believed to be ubiquinone. Couples the redox reaction to proton translocation (for every two electrons transferred, four hydrogen ions are translocated across the cytoplasmic membrane), and thus conserves the redox energy in a proton gradient. The protein is NADH-quinone oxidoreductase subunit K of Acinetobacter baumannii (strain AB307-0294).